We begin with the raw amino-acid sequence, 185 residues long: dTTP/UTP pyrophosphatase (185 aa).

Catalysis depends on Asp-67, which acts as the Proton acceptor.

The protein belongs to the Maf family. YhdE subfamily. Requires a divalent metal cation as cofactor.

It localises to the cytoplasm. The catalysed reaction is dTTP + H2O = dTMP + diphosphate + H(+). It catalyses the reaction UTP + H2O = UMP + diphosphate + H(+). Functionally, nucleoside triphosphate pyrophosphatase that hydrolyzes dTTP and UTP. May have a dual role in cell division arrest and in preventing the incorporation of modified nucleotides into cellular nucleic acids. The chain is dTTP/UTP pyrophosphatase from Lacticaseibacillus casei (strain BL23) (Lactobacillus casei).